Here is a 418-residue protein sequence, read N- to C-terminus: Gamma-glutamyl phosphate reductase (418 aa).

The protein belongs to the gamma-glutamyl phosphate reductase family.

Its subcellular location is the cytoplasm. The enzyme catalyses L-glutamate 5-semialdehyde + phosphate + NADP(+) = L-glutamyl 5-phosphate + NADPH + H(+). It functions in the pathway amino-acid biosynthesis; L-proline biosynthesis; L-glutamate 5-semialdehyde from L-glutamate: step 2/2. In terms of biological role, catalyzes the NADPH-dependent reduction of L-glutamate 5-phosphate into L-glutamate 5-semialdehyde and phosphate. The product spontaneously undergoes cyclization to form 1-pyrroline-5-carboxylate. In Lacticaseibacillus casei (strain BL23) (Lactobacillus casei), this protein is Gamma-glutamyl phosphate reductase.